Here is a 446-residue protein sequence, read N- to C-terminus: Putative zinc metalloprotease NMA0084 (446 aa).

Residue H18 coordinates Zn(2+). The active site involves E19. A Zn(2+)-binding site is contributed by H22. 3 consecutive transmembrane segments (helical) span residues I93–F115, F376–G398, and N419–F438. The PDZ domain occupies P100–S181.

Belongs to the peptidase M50B family. Requires Zn(2+) as cofactor.

Its subcellular location is the cell inner membrane. The protein is Putative zinc metalloprotease NMA0084 of Neisseria meningitidis serogroup A / serotype 4A (strain DSM 15465 / Z2491).